The chain runs to 127 residues: Large ribosomal subunit protein uL22 (127 aa).

The protein belongs to the universal ribosomal protein uL22 family. As to quaternary structure, part of the 50S ribosomal subunit.

Its function is as follows. This protein binds specifically to 23S rRNA; its binding is stimulated by other ribosomal proteins, e.g. L4, L17, and L20. It is important during the early stages of 50S assembly. It makes multiple contacts with different domains of the 23S rRNA in the assembled 50S subunit and ribosome. Functionally, the globular domain of the protein is located near the polypeptide exit tunnel on the outside of the subunit, while an extended beta-hairpin is found that lines the wall of the exit tunnel in the center of the 70S ribosome. The protein is Large ribosomal subunit protein uL22 of Methylobacterium sp. (strain 4-46).